The chain runs to 400 residues: Keratin, type I cytoskeletal 19 (400 aa).

Residues 1–79 (MTSYSYRQSS…TASDGLLAGN (79 aa)) are head. At R7 the chain carries Omega-N-methylarginine. A phosphoserine mark is found at S14 and S22. R24 carries the post-translational modification Asymmetric dimethylarginine; alternate. Residue R24 is modified to Omega-N-methylarginine; alternate. R32 is modified (omega-N-methylarginine). Residues S35 and S40 each carry the phosphoserine modification. 2 positions are modified to omega-N-methylarginine: R43 and R51. 2 positions are modified to phosphoserine: S57 and S72. The interval 80 to 115 (EKLTMQNLNDRLASYLDKVRALEAANGELEVKIRDW) is coil 1A. The 312-residue stretch at 80-391 (EKLTMQNLND…SLLEGQEDHY (312 aa)) folds into the IF rod domain. The segment at 116-133 (YQKQGPGPSRDYSHYYTT) is linker 1. A coil 1B region spans residues 134-225 (IQDLRDKILG…KNHEEEISTL (92 aa)). A linker 12 region spans residues 226-248 (RGQVGGQVSVEVDSAPGTDLAKI). Residues 244–390 (DLAKILSDMR…RSLLEGQEDH (147 aa)) form a necessary for interaction with PNN region. Residues 249–387 (LSDMRSQYEV…ATYRSLLEGQ (139 aa)) are coil 2. Phosphothreonine is present on T323. The tract at residues 388–400 (EDHYNNLSASKVL) is rod-like helical tail. Position 391 is a phosphotyrosine (Y391). A phosphoserine mark is found at S395 and S397.

It belongs to the intermediate filament family. In terms of assembly, heterotetramer of two type I and two type II keratins. Interacts with PNN and the actin-binding domain of DMD. Interacts with HCV core protein. As to quaternary structure, (Microbial infection) Interacts with hepatitis C virus/HCV core protein. Expressed in a defined zone of basal keratinocytes in the deep outer root sheath of hair follicles. Also observed in sweat gland and mammary gland ductal and secretory cells, bile ducts, gastrointestinal tract, bladder urothelium, oral epithelia, esophagus, ectocervical epithelium (at protein level). Expressed in epidermal basal cells, in nipple epidermis and a defined region of the hair follicle. Also seen in a subset of vascular wall cells in both the veins and artery of human umbilical cord, and in umbilical cord vascular smooth muscle. Observed in muscle fibers accumulating in the costameres of myoplasm at the sarcolemma in structures that contain dystrophin and spectrin.

Functionally, involved in the organization of myofibers. Together with KRT8, helps to link the contractile apparatus to dystrophin at the costameres of striated muscle. In Homo sapiens (Human), this protein is Keratin, type I cytoskeletal 19 (KRT19).